A 155-amino-acid chain; its full sequence is Ribosomal RNA large subunit methyltransferase H (155 aa).

Residues I71, G103, and 122–127 (FGRMVW) contribute to the S-adenosyl-L-methionine site.

It belongs to the RNA methyltransferase RlmH family. In terms of assembly, homodimer.

Its subcellular location is the cytoplasm. It catalyses the reaction pseudouridine(1915) in 23S rRNA + S-adenosyl-L-methionine = N(3)-methylpseudouridine(1915) in 23S rRNA + S-adenosyl-L-homocysteine + H(+). Functionally, specifically methylates the pseudouridine at position 1915 (m3Psi1915) in 23S rRNA. This chain is Ribosomal RNA large subunit methyltransferase H, found in Cereibacter sphaeroides (strain ATCC 17025 / ATH 2.4.3) (Rhodobacter sphaeroides).